The chain runs to 1194 residues: Multidrug efflux ATP-binding/permease protein Rv0194 (1194 aa).

The next 6 membrane-spanning stretches (helical) occupy residues 20–40 (LLLGFGAALAGTVIAVLVPLV), 56–76 (LAPWAVVLVAAAGATYLLMYV), 130–150 (LLFDVPNVLRHVLTLLLGVAV), 153–173 (WLSVPLALLAVLLVPVIGLIA), 258–278 (FALGGWMAAQGSITVGTFVAF), and 279–299 (WACLTLLARPACDLAGMLTIA). Positions 21 to 301 (LLGFGAALAG…LAGMLTIAQQ (281 aa)) constitute an ABC transmembrane type-1 1 domain. An ABC transporter 1 domain is found at 334 to 568 (LEFQRVSFGY…CPRYRELLSP (235 aa)). ATP is bound at residue 367–374 (GAPGSGKS). 6 consecutive transmembrane segments (helical) span residues 628–648 (ALSLLLVAVQTCAGLLPPLLI), 660–680 (VLSALWWAALAGTATVVIRWV), 743–763 (LVVAVISVVTLVGILVALLAI), 765–785 (ARLVLLIFTTMPVLALATWQF), 847–867 (LLALYYPFVALLCSLATTLVL), and 878–898 (VISVGALVTYLLYIELLYTPI). The ABC transmembrane type-1 2 domain occupies 628 to 910 (ALSLLLVAVQ…LAQMFDDYQR (283 aa)). Residues 942–1177 (VVFDAVHYSY…GGHYSRLWAA (236 aa)) form the ABC transporter 2 domain. 976-983 (GSTGSGKS) is an ATP binding site.

It belongs to the ABC transporter superfamily. Lipid exporter (TC 3.A.1.106) family.

The protein localises to the cell inner membrane. Its activity is regulated as follows. Efflux is inhibited by reserpine. In terms of biological role, overexpression in M.smegmatis increases resistance to erythromycin, ampicillin, novobiocin and vancomycin. It also reduces accumulation of ethidium bromide in the cell. This chain is Multidrug efflux ATP-binding/permease protein Rv0194, found in Mycobacterium tuberculosis (strain ATCC 25618 / H37Rv).